We begin with the raw amino-acid sequence, 414 residues long: Enterobactin exporter EntS (414 aa).

Over 1-21 the chain is Cytoplasmic; the sequence is MNRQSWLLNLSLLKTHPAFRA. A helical membrane pass occupies residues 22–42; that stretch reads VFLARFISIVSLGLLGVAVPV. Over 43 to 55 the chain is Periplasmic; sequence QIQMMTHSTWQVG. Residues 56 to 76 traverse the membrane as a helical segment; the sequence is LSVTLTGGAMFIGLMVGGVLA. The Cytoplasmic segment spans residues 77–83; it reads DRYERKK. Residues 84-104 traverse the membrane as a helical segment; it reads VILLARGTCGIGFIGLCVNAL. Residues 105 to 109 are Periplasmic-facing; that stretch reads LPEPS. The helical transmembrane segment at 110-130 threads the bilayer; that stretch reads LLAIYLLGLWDGFFASLGVTA. Residues 131–156 are Cytoplasmic-facing; the sequence is LLAATPALVGRENLMQAGAITMLTVR. A helical membrane pass occupies residues 157 to 177; the sequence is LGSVISPMLGGILLASGGVAW. Asn-178 is a topological domain (periplasmic). A helical transmembrane segment spans residues 179–199; sequence YGLAAAGTFITLLPLLTLPRL. Residues 200–218 are Cytoplasmic-facing; the sequence is PVPPQPRENPFIALLAAFR. A helical transmembrane segment spans residues 219–239; it reads FLLASPLIGGIALLGGLVTMA. The Periplasmic portion of the chain corresponds to 240–256; that stretch reads SAVRVLYPALAMSWQMS. A helical transmembrane segment spans residues 257–277; that stretch reads AAQIGLLYAAIPLGAAIGALT. At 278-287 the chain is on the cytoplasmic side; that stretch reads SGQLAHSVRP. Residues 288–307 form a helical membrane-spanning segment; that stretch reads GLIMLVSTVGSFLAVGLFAI. Residues 308-313 lie on the Periplasmic side of the membrane; the sequence is MPVWIA. Residues 314-336 traverse the membrane as a helical segment; it reads GVICLALFGWLSAISSLLQYTLL. Residues 337–356 are Cytoplasmic-facing; that stretch reads QTQTPENMLGRMNGLWTAQN. Residues 357–377 traverse the membrane as a helical segment; it reads VTGDAIGAALLGGLGAMMTPV. Ala-378 is a topological domain (periplasmic). A helical membrane pass occupies residues 379-399; the sequence is SASVSGFGLVIIGLLLLLVLG. The Cytoplasmic segment spans residues 400 to 414; it reads ELRRFRQTPPVSDAG.

The protein belongs to the major facilitator superfamily. EntS (TC 2.A.1.38) family.

The protein localises to the cell inner membrane. In terms of biological role, component of an export pathway for enterobactin. The protein is Enterobactin exporter EntS of Salmonella typhimurium (strain LT2 / SGSC1412 / ATCC 700720).